Reading from the N-terminus, the 461-residue chain is Deoxyguanosinetriphosphate triphosphohydrolase-like protein (461 aa).

Positions glutamate 22 to aspartate 41 are disordered. Basic and acidic residues predominate over residues phenylalanine 24–aspartate 41. Residues arginine 72–glycine 285 form the HD domain.

This sequence belongs to the dGTPase family. Type 2 subfamily.

The chain is Deoxyguanosinetriphosphate triphosphohydrolase-like protein from Haemophilus influenzae (strain PittGG).